The sequence spans 357 residues: UPF0283 membrane protein BSUIS_A1077 (357 aa).

The segment at 1–36 is disordered; sequence MSDKTPRKPTAFRLEQPARVSAASEQEEPRHPRAVK. Residues 27–36 show a composition bias toward basic and acidic residues; sequence EEPRHPRAVK. 2 consecutive transmembrane segments (helical) span residues 78–98 and 109–129; these read ILFG…TEDL and LGWT…AIIL.

This sequence belongs to the UPF0283 family.

It is found in the cell inner membrane. This Brucella suis (strain ATCC 23445 / NCTC 10510) protein is UPF0283 membrane protein BSUIS_A1077.